A 596-amino-acid polypeptide reads, in one-letter code: Pentatricopeptide repeat-containing protein At1g80270, mitochondrial (596 aa).

The N-terminal 69 residues, 1–69 (MFALSKVLRR…RALSSSAGTK (69 aa)), are a transit peptide targeting the mitochondrion. Positions 62-119 (LSSSAGTKSDQEEDDLEDGFSELEGSKSGQGSTSSDEDEGKLSADEEEEEELDLIETD) are disordered. 2 stretches are compositionally biased toward acidic residues: residues 72-82 (QEEDDLEDGFS) and 96-117 (SDED…DLIE). 9 PPR repeats span residues 228-262 (GEVL…GFPL), 263-296 (SGFT…NIKP), 297-331 (SLLT…GVEL), 332-366 (DFQT…SLEA), 367-397 (NRRA…CESK), 399-433 (YFEE…DRRA), 434-468 (SSST…GCRI), 469-503 (EATT…SHTK), and 505-539 (MMNS…GYTS).

The protein belongs to the PPR family. P subfamily.

It is found in the mitochondrion. The protein is Pentatricopeptide repeat-containing protein At1g80270, mitochondrial of Arabidopsis thaliana (Mouse-ear cress).